The sequence spans 222 residues: UPF0758 protein YPN_3801 (222 aa).

The region spanning 100–222 is the MPN domain; sequence VLLNPGITQK…CVSFAERGWL (123 aa). Zn(2+) contacts are provided by H171, H173, and D184. The JAMM motif signature appears at 171–184; the sequence is HNHPSGKAEPSQAD.

This sequence belongs to the UPF0758 family. YicR subfamily.

In Yersinia pestis bv. Antiqua (strain Nepal516), this protein is UPF0758 protein YPN_3801.